The chain runs to 217 residues: Ras-related protein RIC2 (217 aa).

Residues 21–28 (GDSGVGKS), 69–73 (DTAGQ), and 127–130 (NKSD) each bind GTP. S-geranylgeranyl cysteine attachment occurs at residues Cys-214 and Cys-215.

Belongs to the small GTPase superfamily. Rab family.

It localises to the cell membrane. Functionally, possesses GTPase activity. The sequence is that of Ras-related protein RIC2 (RIC2) from Oryza sativa subsp. japonica (Rice).